A 628-amino-acid chain; its full sequence is Probable potassium transport system protein Kup (628 aa).

Helical transmembrane passes span 56–76 (ILSL…VLLI), 109–129 (LILG…TPAI), 141–161 (AAPG…TLLF), 174–194 (FFGP…VVHI), 209–229 (ALAF…AVVL), 253–273 (WFSL…AMLL), 295–315 (LIVL…TAAF), 343–363 (IYVP…VVTF), 372–392 (AYGI…FFVI), 400–420 (WALC…FFAA), and 425–445 (ILDG…LMMT).

It belongs to the HAK/KUP transporter (TC 2.A.72) family.

The protein localises to the cell inner membrane. The catalysed reaction is K(+)(in) + H(+)(in) = K(+)(out) + H(+)(out). Its function is as follows. Transport of potassium into the cell. Likely operates as a K(+):H(+) symporter. This chain is Probable potassium transport system protein Kup, found in Methylibium petroleiphilum (strain ATCC BAA-1232 / LMG 22953 / PM1).